A 652-amino-acid chain; its full sequence is RNA-binding E3 ubiquitin-protein ligase MEX3C (652 aa).

2 disordered regions span residues Ala-15–Gly-39 and Gln-80–Pro-136. The segment covering Ala-18–Gly-33 has biased composition (pro residues). The segment covering Ala-101–Asp-134 has biased composition (acidic residues). KH domains are found at residues Thr-225–Ile-286 and Gln-319–Ile-380. 2 disordered regions span residues Ala-429–Thr-448 and Phe-506–Leu-566. Over residues Arg-430–Thr-448 the composition is skewed to low complexity. The segment covering Pro-519–Leu-537 has biased composition (polar residues). 2 positions are modified to phosphoserine: Ser-530 and Ser-538. The span at Ser-544 to Ser-555 shows a compositional bias: basic and acidic residues. The segment at Cys-601–Gln-641 adopts an RING-type zinc-finger fold.

Interacts with USP7, which antagonizes the ability to degrade mRNA. In terms of processing, phosphorylated.

Its subcellular location is the nucleus. It localises to the cytoplasm. It catalyses the reaction S-ubiquitinyl-[E2 ubiquitin-conjugating enzyme]-L-cysteine + [acceptor protein]-L-lysine = [E2 ubiquitin-conjugating enzyme]-L-cysteine + N(6)-ubiquitinyl-[acceptor protein]-L-lysine.. RNA-binding protein. May be involved in post-transcriptional regulatory mechanisms, modulating levels of some mRNAs by promoting their degradation in a way involving ubiquitin ligase activity. May act as suppressor of replication stress and chromosome missegregation. In Mus musculus (Mouse), this protein is RNA-binding E3 ubiquitin-protein ligase MEX3C (Mex3c).